A 122-amino-acid chain; its full sequence is Nuclear transport factor 2A (122 aa).

M1 is modified (N-acetylmethionine). An NTF2 domain is found at 6-119 (VAKAFVEHYY…YYVFNDIFRL (114 aa)).

Interacts with RAN1. In terms of tissue distribution, expressed in roots, stems, leaves and flowers, and, at low levels, in siliques.

It is found in the cytoplasm. Its subcellular location is the nucleus. The protein localises to the nucleus envelope. In terms of biological role, facilitates protein transport into the nucleus. Interacts with various nucleoporins and with Ran-GDP. Could be part of a multicomponent system of cytosolic factors that assemble at the pore complex during nuclear import. This Arabidopsis thaliana (Mouse-ear cress) protein is Nuclear transport factor 2A.